We begin with the raw amino-acid sequence, 293 residues long: Bifunctional monothiol glutaredoxin-S16, chloroplastic (293 aa).

The transit peptide at 1 to 62 (MAAITISSSL…APSRRRSFFI (62 aa)) directs the protein to the chloroplast. Cys123 and Cys219 are oxidised to a cystine. One can recognise a Glutaredoxin domain in the interval 194–293 (EELIDRLVKE…ENGELANILN (100 aa)). Lys211 is a glutathione binding site. Cys219 contributes to the [2Fe-2S] cluster binding site. Glutathione is bound by residues Arg251, Phe263, and 276-277 (CD).

The protein belongs to the glutaredoxin family. CGFS subfamily. [2Fe-2S]-bridged holo-homodimer. Interacts in vitro with SUFE1, BOLA1, BOLA2 and BOLA4. Interacts in vivo only with SUFE1, BOLA1 and BOLA4. Interacts with SBP1.

It localises to the plastid. The protein localises to the chloroplast. Its activity is regulated as follows. The formation of an intramolecular disulfide bond negatively regulates both the N-terminal endonuclease and the C-terminal glutaredoxin activities. Its function is as follows. May only reduce GSH-thiol disulfides, but not protein disulfides. Participates probably to the maturation of iron-sulfur proteins and to the regulation of the redox state of the BOLA proteins. The GRXS16-BOLA1 heterodimer binds a labile, oxygen sensitive iron-sulfur cluster. Able to cleave linearized DNA in vitro. The sequence is that of Bifunctional monothiol glutaredoxin-S16, chloroplastic from Arabidopsis thaliana (Mouse-ear cress).